The sequence spans 616 residues: Proline--tRNA ligase (616 aa).

It belongs to the class-II aminoacyl-tRNA synthetase family. ProS type 1 subfamily. As to quaternary structure, homodimer.

Its subcellular location is the cytoplasm. The catalysed reaction is tRNA(Pro) + L-proline + ATP = L-prolyl-tRNA(Pro) + AMP + diphosphate. Functionally, catalyzes the attachment of proline to tRNA(Pro) in a two-step reaction: proline is first activated by ATP to form Pro-AMP and then transferred to the acceptor end of tRNA(Pro). As ProRS can inadvertently accommodate and process non-cognate amino acids such as alanine and cysteine, to avoid such errors it has two additional distinct editing activities against alanine. One activity is designated as 'pretransfer' editing and involves the tRNA(Pro)-independent hydrolysis of activated Ala-AMP. The other activity is designated 'posttransfer' editing and involves deacylation of mischarged Ala-tRNA(Pro). The misacylated Cys-tRNA(Pro) is not edited by ProRS. The chain is Proline--tRNA ligase from Lactococcus lactis subsp. lactis (strain IL1403) (Streptococcus lactis).